The chain runs to 318 residues: Protein LplB (318 aa).

The next 6 membrane-spanning stretches (helical) occupy residues 35-55 (LIPG…GVLI), 94-114 (LMLA…LALL), 130-150 (FIYV…FVFF), 182-202 (IVMQ…LAAL), 236-256 (IIVL…EQVY), and 289-309 (AVGL…NYIA). Residues 90-305 (LRNTLMLASL…VVGIILIFGA (216 aa)) form the ABC transmembrane type-1 domain.

It belongs to the binding-protein-dependent transport system permease family. MalFG subfamily.

Its subcellular location is the cell membrane. The chain is Protein LplB (lplB) from Bacillus subtilis (strain 168).